Reading from the N-terminus, the 503-residue chain is ATP synthase subunit alpha (503 aa).

An ATP-binding site is contributed by G169–T176.

The protein belongs to the ATPase alpha/beta chains family. F-type ATPases have 2 components, CF(1) - the catalytic core - and CF(0) - the membrane proton channel. CF(1) has five subunits: alpha(3), beta(3), gamma(1), delta(1), epsilon(1). CF(0) has three main subunits: a(1), b(2) and c(9-12). The alpha and beta chains form an alternating ring which encloses part of the gamma chain. CF(1) is attached to CF(0) by a central stalk formed by the gamma and epsilon chains, while a peripheral stalk is formed by the delta and b chains.

The protein resides in the cell membrane. The catalysed reaction is ATP + H2O + 4 H(+)(in) = ADP + phosphate + 5 H(+)(out). Produces ATP from ADP in the presence of a proton gradient across the membrane. The alpha chain is a regulatory subunit. In Lactobacillus delbrueckii subsp. bulgaricus (strain ATCC BAA-365 / Lb-18), this protein is ATP synthase subunit alpha.